A 588-amino-acid chain; its full sequence is Adenine deaminase (588 aa).

It belongs to the metallo-dependent hydrolases superfamily. Adenine deaminase family. As to quaternary structure, homodimer. The cofactor is Mn(2+).

The enzyme catalyses adenine + H2O + H(+) = hypoxanthine + NH4(+). This chain is Adenine deaminase, found in Escherichia coli O81 (strain ED1a).